Reading from the N-terminus, the 423-residue chain is Serine--tRNA ligase (423 aa).

An L-serine-binding site is contributed by 230–232; the sequence is TSE. 261 to 263 is an ATP binding site; sequence RSE. Glu-284 provides a ligand contact to L-serine. Residue 348–351 participates in ATP binding; the sequence is EISS. Ser-384 lines the L-serine pocket.

Belongs to the class-II aminoacyl-tRNA synthetase family. Type-1 seryl-tRNA synthetase subfamily. As to quaternary structure, homodimer. The tRNA molecule binds across the dimer.

Its subcellular location is the cytoplasm. It catalyses the reaction tRNA(Ser) + L-serine + ATP = L-seryl-tRNA(Ser) + AMP + diphosphate + H(+). The catalysed reaction is tRNA(Sec) + L-serine + ATP = L-seryl-tRNA(Sec) + AMP + diphosphate + H(+). It participates in aminoacyl-tRNA biosynthesis; selenocysteinyl-tRNA(Sec) biosynthesis; L-seryl-tRNA(Sec) from L-serine and tRNA(Sec): step 1/1. Its function is as follows. Catalyzes the attachment of serine to tRNA(Ser). Is also able to aminoacylate tRNA(Sec) with serine, to form the misacylated tRNA L-seryl-tRNA(Sec), which will be further converted into selenocysteinyl-tRNA(Sec). The polypeptide is Serine--tRNA ligase (Macrococcus caseolyticus (strain JCSC5402) (Macrococcoides caseolyticum)).